The sequence spans 532 residues: uncharacterized protein (532 aa).

The next 6 helical transmembrane spans lie at 7–26, 30–52, 59–77, 87–109, 116–134, and 139–161; these read HSSYFSLFLIVALGFMLGRI, GLSLDVSAVIFIALLFGHFGVII, FGLVLFIFTIGIQAGPGFF, LIIITMLIISSACLTAVGLKYAF, VVGLVAGALTSTPGLAVAI, and SPLASIAYGIAYPFGVIGVILFV. RCK C-terminal domains follow at residues 179-262 and 263-346; these read LEIE…LVGE and REEG…LLGN. Helical transmembrane passes span 356–378, 388–410, 446–468, and 509–531; these read FFPIAMGIVLGVLFGKLNISFPG, GGVLMVALLLSAIGKTGPILWSM, GLLLFGVGAAITLVPMLIAAFVG, and YATVYPIAMVFLILFIQVIATVV.

Belongs to the AAE transporter (TC 2.A.81) family.

It is found in the cell membrane. This is an uncharacterized protein from Bacteroides fragilis (strain YCH46).